We begin with the raw amino-acid sequence, 177 residues long: Large ribosomal subunit protein uL6 (177 aa).

The protein belongs to the universal ribosomal protein uL6 family. As to quaternary structure, part of the 50S ribosomal subunit.

Its function is as follows. This protein binds to the 23S rRNA, and is important in its secondary structure. It is located near the subunit interface in the base of the L7/L12 stalk, and near the tRNA binding site of the peptidyltransferase center. The chain is Large ribosomal subunit protein uL6 from Rhizorhabdus wittichii (strain DSM 6014 / CCUG 31198 / JCM 15750 / NBRC 105917 / EY 4224 / RW1) (Sphingomonas wittichii).